We begin with the raw amino-acid sequence, 197 residues long: Peptide deformylase (197 aa).

2 residues coordinate Fe cation: cysteine 106 and histidine 148. Glutamate 149 is a catalytic residue. Histidine 152 contributes to the Fe cation binding site.

This sequence belongs to the polypeptide deformylase family. Requires Fe(2+) as cofactor.

The enzyme catalyses N-terminal N-formyl-L-methionyl-[peptide] + H2O = N-terminal L-methionyl-[peptide] + formate. Functionally, removes the formyl group from the N-terminal Met of newly synthesized proteins. Requires at least a dipeptide for an efficient rate of reaction. N-terminal L-methionine is a prerequisite for activity but the enzyme has broad specificity at other positions. The protein is Peptide deformylase of Mycobacterium sp. (strain JLS).